Reading from the N-terminus, the 515-residue chain is Transcription termination factor Rho (515 aa).

The Rho RNA-BD domain occupies 146-221; it reads DVLFTGVLDV…VKIKSINDQD (76 aa). ATP-binding positions include 264-269, 276-281, and Arg307; these read GKGQRA and KAGKTT.

This sequence belongs to the Rho family. In terms of assembly, homohexamer. The homohexamer assembles into an open ring structure.

In terms of biological role, facilitates transcription termination by a mechanism that involves Rho binding to the nascent RNA, activation of Rho's RNA-dependent ATPase activity, and release of the mRNA from the DNA template. This chain is Transcription termination factor Rho, found in Borreliella burgdorferi (strain ATCC 35210 / DSM 4680 / CIP 102532 / B31) (Borrelia burgdorferi).